The sequence spans 623 residues: Membrane protein insertase YidC (623 aa).

Helical transmembrane passes span 8–28 (LILATGLSFLVIMVWFFLFPP), 379–399 (MGLAIIALTFLLKALVLPLAY), 449–469 (LPILIQIPIFFSLYKVIFVTI), 507–527 (TTMALIFIGALPILLGVSMWL), and 543–563 (IFAWMPWVFMFMLGHFASGLV). Positions 601–617 (KPAAQPAGKAANDGAAP) are enriched in low complexity. A disordered region spans residues 601 to 623 (KPAAQPAGKAANDGAAPAKKRKP).

The protein belongs to the OXA1/ALB3/YidC family. Type 1 subfamily. Interacts with the Sec translocase complex via SecD. Specifically interacts with transmembrane segments of nascent integral membrane proteins during membrane integration.

The protein localises to the cell inner membrane. Required for the insertion and/or proper folding and/or complex formation of integral membrane proteins into the membrane. Involved in integration of membrane proteins that insert both dependently and independently of the Sec translocase complex, as well as at least some lipoproteins. Aids folding of multispanning membrane proteins. In Cereibacter sphaeroides (strain ATCC 17023 / DSM 158 / JCM 6121 / CCUG 31486 / LMG 2827 / NBRC 12203 / NCIMB 8253 / ATH 2.4.1.) (Rhodobacter sphaeroides), this protein is Membrane protein insertase YidC.